Consider the following 53-residue polypeptide: ATP synthase F(0) complex subunit 8 (53 aa).

Residues 8–24 traverse the membrane as a helical segment; that stretch reads PWLTTFLIVWISLIVIL.

This sequence belongs to the ATPase protein 8 family. Component of the ATP synthase complex composed at least of ATP5F1A/subunit alpha, ATP5F1B/subunit beta, ATP5MC1/subunit c (homooctomer), MT-ATP6/subunit a, MT-ATP8/subunit 8, ATP5ME/subunit e, ATP5MF/subunit f, ATP5MG/subunit g, ATP5MK/subunit k, ATP5MJ/subunit j, ATP5F1C/subunit gamma, ATP5F1D/subunit delta, ATP5F1E/subunit epsilon, ATP5PF/subunit F6, ATP5PB/subunit b, ATP5PD/subunit d, ATP5PO/subunit OSCP. ATP synthase complex consists of a soluble F(1) head domain (subunits alpha(3) and beta(3)) - the catalytic core - and a membrane F(0) domain - the membrane proton channel (subunits c, a, 8, e, f, g, k and j). These two domains are linked by a central stalk (subunits gamma, delta, and epsilon) rotating inside the F1 region and a stationary peripheral stalk (subunits F6, b, d, and OSCP).

It localises to the mitochondrion membrane. Subunit 8, of the mitochondrial membrane ATP synthase complex (F(1)F(0) ATP synthase or Complex V) that produces ATP from ADP in the presence of a proton gradient across the membrane which is generated by electron transport complexes of the respiratory chain. ATP synthase complex consist of a soluble F(1) head domain - the catalytic core - and a membrane F(1) domain - the membrane proton channel. These two domains are linked by a central stalk rotating inside the F(1) region and a stationary peripheral stalk. During catalysis, ATP synthesis in the catalytic domain of F(1) is coupled via a rotary mechanism of the central stalk subunits to proton translocation. In vivo, can only synthesize ATP although its ATP hydrolase activity can be activated artificially in vitro. Part of the complex F(0) domain. This is ATP synthase F(0) complex subunit 8 from Alligator mississippiensis (American alligator).